The chain runs to 549 residues: Glucose-6-phosphate isomerase (549 aa).

Catalysis depends on E355, which acts as the Proton donor. Catalysis depends on residues H386 and K514.

This sequence belongs to the GPI family.

Its subcellular location is the cytoplasm. The enzyme catalyses alpha-D-glucose 6-phosphate = beta-D-fructose 6-phosphate. Its pathway is carbohydrate biosynthesis; gluconeogenesis. It functions in the pathway carbohydrate degradation; glycolysis; D-glyceraldehyde 3-phosphate and glycerone phosphate from D-glucose: step 2/4. Catalyzes the reversible isomerization of glucose-6-phosphate to fructose-6-phosphate. This is Glucose-6-phosphate isomerase from Salmonella paratyphi C (strain RKS4594).